Here is a 266-residue protein sequence, read N- to C-terminus: 5'-nucleotidase SurE (266 aa).

Residues Asp-8, Asp-9, Ser-39, and Asn-93 each contribute to the a divalent metal cation site.

Belongs to the SurE nucleotidase family. A divalent metal cation serves as cofactor.

It is found in the cytoplasm. The enzyme catalyses a ribonucleoside 5'-phosphate + H2O = a ribonucleoside + phosphate. In terms of biological role, nucleotidase that shows phosphatase activity on nucleoside 5'-monophosphates. This chain is 5'-nucleotidase SurE, found in Pyrobaculum arsenaticum (strain DSM 13514 / JCM 11321 / PZ6).